A 239-amino-acid polypeptide reads, in one-letter code: 1-(5-phosphoribosyl)-5-[(5-phosphoribosylamino)methylideneamino] imidazole-4-carboxamide isomerase (239 aa).

Residue Asp-9 is the Proton acceptor of the active site. Catalysis depends on Asp-131, which acts as the Proton donor.

This sequence belongs to the HisA/HisF family.

The protein resides in the cytoplasm. The catalysed reaction is 1-(5-phospho-beta-D-ribosyl)-5-[(5-phospho-beta-D-ribosylamino)methylideneamino]imidazole-4-carboxamide = 5-[(5-phospho-1-deoxy-D-ribulos-1-ylimino)methylamino]-1-(5-phospho-beta-D-ribosyl)imidazole-4-carboxamide. Its pathway is amino-acid biosynthesis; L-histidine biosynthesis; L-histidine from 5-phospho-alpha-D-ribose 1-diphosphate: step 4/9. This is 1-(5-phosphoribosyl)-5-[(5-phosphoribosylamino)methylideneamino] imidazole-4-carboxamide isomerase from Bacteroides fragilis (strain YCH46).